The chain runs to 494 residues: Zinc finger and SCAN domain-containing protein 30 (494 aa).

Residues Arg48–Leu130 form the SCAN box domain. Lys197 participates in a covalent cross-link: Glycyl lysine isopeptide (Lys-Gly) (interchain with G-Cter in SUMO2). 7 consecutive C2H2-type zinc fingers follow at residues Tyr301 to His323, Tyr329 to His351, Tyr357 to His379, Tyr385 to His407, Tyr413 to His435, Tyr441 to His463, and Tyr469 to His491.

This sequence belongs to the krueppel C2H2-type zinc-finger protein family.

It localises to the nucleus. Functionally, may be involved in transcriptional regulation. The protein is Zinc finger and SCAN domain-containing protein 30 (ZSCAN30) of Homo sapiens (Human).